We begin with the raw amino-acid sequence, 258 residues long: Snake venom serine protease 3 (258 aa).

Residues 1-18 (MVLIRVLANLLILQLSYA) form the signal peptide. Positions 19-24 (QKSSEL) are excised as a propeptide. Residues 25-249 (IIGGHPCNIN…YTDWIQSIIA (225 aa)) enclose the Peptidase S1 domain. 6 cysteine pairs are disulfide-bonded: Cys-31–Cys-163, Cys-50–Cys-66, Cys-98–Cys-256, Cys-142–Cys-210, Cys-174–Cys-189, and Cys-200–Cys-225. Asn-44 carries an N-linked (GlcNAc...) asparagine glycan. Catalysis depends on charge relay system residues His-65 and Asp-110. Ser-204 acts as the Charge relay system in catalysis. An N-linked (GlcNAc...) asparagine glycan is attached at Asn-239.

The protein belongs to the peptidase S1 family. Snake venom subfamily. As to quaternary structure, monomer. Expressed by the venom gland.

It localises to the secreted. In terms of biological role, snake venom serine protease that may act in the hemostasis system of the prey. This is Snake venom serine protease 3 from Protobothrops jerdonii (Jerdon's pitviper).